We begin with the raw amino-acid sequence, 62 residues long: Cytotoxin 11 (62 aa).

4 disulfides stabilise this stretch: cysteine 3-cysteine 22, cysteine 15-cysteine 40, cysteine 44-cysteine 55, and cysteine 56-cysteine 61.

This sequence belongs to the three-finger toxin family. Short-chain subfamily. Orphan group XV sub-subfamily. Expressed by the venom gland.

It is found in the secreted. The protein resides in the target cell membrane. In terms of biological role, has low cytotoxic activity. This chain is Cytotoxin 11, found in Naja annulifera (Banded Egyptian cobra).